Reading from the N-terminus, the 583-residue chain is Aspartate--tRNA(Asp/Asn) ligase (583 aa).

Glu173 lines the L-aspartate pocket. Residues 197–200 (QMFK) are aspartate. Arg219 is an L-aspartate binding site. Residues 219–221 (RDE) and Gln228 contribute to the ATP site. His447 contacts L-aspartate. Residue Glu481 participates in ATP binding. Arg488 serves as a coordination point for L-aspartate. 533–536 (GLDR) lines the ATP pocket.

Belongs to the class-II aminoacyl-tRNA synthetase family. Type 1 subfamily. As to quaternary structure, homodimer.

It is found in the cytoplasm. It catalyses the reaction tRNA(Asx) + L-aspartate + ATP = L-aspartyl-tRNA(Asx) + AMP + diphosphate. In terms of biological role, aspartyl-tRNA synthetase with relaxed tRNA specificity since it is able to aspartylate not only its cognate tRNA(Asp) but also tRNA(Asn). Reaction proceeds in two steps: L-aspartate is first activated by ATP to form Asp-AMP and then transferred to the acceptor end of tRNA(Asp/Asn). In Elusimicrobium minutum (strain Pei191), this protein is Aspartate--tRNA(Asp/Asn) ligase.